Reading from the N-terminus, the 118-residue chain is NADH-quinone oxidoreductase subunit A 2 (118 aa).

3 consecutive transmembrane segments (helical) span residues 5–25 (YLPIIVLVVVAVLFGCGSLIF), 62–82 (IIAMLFILFDIEAVFLYPWAV), and 87–107 (LGMFGLMEMGVFIVILFVGYI).

This sequence belongs to the complex I subunit 3 family. In terms of assembly, NDH-1 is composed of 14 different subunits. Subunits NuoA, H, J, K, L, M, N constitute the membrane sector of the complex.

It localises to the cell inner membrane. The catalysed reaction is a quinone + NADH + 5 H(+)(in) = a quinol + NAD(+) + 4 H(+)(out). In terms of biological role, NDH-1 shuttles electrons from NADH, via FMN and iron-sulfur (Fe-S) centers, to quinones in the respiratory chain. The immediate electron acceptor for the enzyme in this species is believed to be ubiquinone. Couples the redox reaction to proton translocation (for every two electrons transferred, four hydrogen ions are translocated across the cytoplasmic membrane), and thus conserves the redox energy in a proton gradient. The chain is NADH-quinone oxidoreductase subunit A 2 from Geotalea uraniireducens (strain Rf4) (Geobacter uraniireducens).